A 729-amino-acid chain; its full sequence is MLYKGDTLYLDWLEDGIAELVFDAPGSVNKLDTATVASLGQALEVLEKQHDLKGLLLRSNKAAFIVGADITEFLSLFLVPEEQLSQWLHFANSVFNRLEDLPVPTLAAVNGYALGGGCECVLATDYRLATPDLRIGLPETKLGIMPGFGGSVRLPRMLGADSALEIIAAGKDVGAEHALKIGLVDGVVKQEKLIEGAIAVLRQAITGDLDWRAKRQPKLEPLKLSKIEAAMSFTIAKGMVAQTAGKHYPAPMTAVKTIEAAARFGREEALNLENKSFVPLAHTNEARALVGIFLNDQYVKGKAKKLTKDIETPKQAAVLGAGIMGGGIAYQSAWKGVPVIMKDINDKSLNLGMTEAAKLLNKQLERGKIDGLKLAGVISTIHPTLDYAGFDRVDVVVEAVVENPKVKKAVLAETEQKVRPETVLASNTSTIPIGELASALERPENFCGMHFFNPVHRMPLVEIIRGEKSSDETIAKVVAWASKMGKTPIVVNDCPGFFVNRVLFPYFAGFSQLLRDGADFRKVDKVMEKQFGWPMGPAYLLDVVGIDTAHHAQAVMAAGFPQRMQKDYRDAIDALFDASRFGQKNGLGFWRYKEDSKGKPKKEEDAAVDDLLASVSQPKRDFSDDEIIARMMIPMINEVVRCLEEGIIASPAEADMALVYGLGFPPFHGGAFRWLDTQGSAKYLDMAQQYQHLGPLYEVPEGLRNKARHNEPYYPPVEPARPVGSLKTA.

The segment at 1–189 (MLYKGDTLYL…KIGLVDGVVK (189 aa)) is enoyl-CoA hydratase/isomerase. Aspartate 296 serves as a coordination point for substrate. The interval 311–729 (ETPKQAAVLG…ARPVGSLKTA (419 aa)) is 3-hydroxyacyl-CoA dehydrogenase. NAD(+)-binding positions include methionine 324, aspartate 343, 400–402 (VVE), lysine 407, and serine 429. The active-site For 3-hydroxyacyl-CoA dehydrogenase activity is histidine 450. Residue asparagine 453 coordinates NAD(+). Asparagine 500 and tyrosine 660 together coordinate substrate. The tract at residues 708 to 729 (RHNEPYYPPVEPARPVGSLKTA) is disordered.

It in the N-terminal section; belongs to the enoyl-CoA hydratase/isomerase family. The protein in the C-terminal section; belongs to the 3-hydroxyacyl-CoA dehydrogenase family. As to quaternary structure, heterotetramer of two alpha chains (FadB) and two beta chains (FadA).

The catalysed reaction is a (3S)-3-hydroxyacyl-CoA + NAD(+) = a 3-oxoacyl-CoA + NADH + H(+). It catalyses the reaction a (3S)-3-hydroxyacyl-CoA = a (2E)-enoyl-CoA + H2O. It carries out the reaction a 4-saturated-(3S)-3-hydroxyacyl-CoA = a (3E)-enoyl-CoA + H2O. The enzyme catalyses (3S)-3-hydroxybutanoyl-CoA = (3R)-3-hydroxybutanoyl-CoA. The catalysed reaction is a (3Z)-enoyl-CoA = a 4-saturated (2E)-enoyl-CoA. It catalyses the reaction a (3E)-enoyl-CoA = a 4-saturated (2E)-enoyl-CoA. It functions in the pathway lipid metabolism; fatty acid beta-oxidation. In terms of biological role, involved in the aerobic and anaerobic degradation of long-chain fatty acids via beta-oxidation cycle. Catalyzes the formation of 3-oxoacyl-CoA from enoyl-CoA via L-3-hydroxyacyl-CoA. It can also use D-3-hydroxyacyl-CoA and cis-3-enoyl-CoA as substrate. The chain is Fatty acid oxidation complex subunit alpha from Salmonella typhimurium (strain LT2 / SGSC1412 / ATCC 700720).